The sequence spans 129 residues: LEM domain-containing protein 1 (129 aa).

In terms of domain architecture, LEM spans 1-45; sequence MVDVKCLSDYELHKHLMKLGFTPGPILPSTRKTYEKKLVQLLASP. Residues 45 to 129 form a disordered region; sequence PPWKPPVMKR…RAPRTTSHGA (85 aa). Residues 83-97 show a composition bias toward basic and acidic residues; that stretch reads SLKKTTLDATRDPRA.

This is LEM domain-containing protein 1 (Lemd1) from Mus musculus (Mouse).